The following is a 651-amino-acid chain: Acetyl-coenzyme A synthetase (651 aa).

CoA is bound by residues 189-192 (RGGK), T311, and N335. ATP is bound by residues 387–389 (GEP), 411–416 (DTWWQT), D500, and R515. Residue S523 participates in CoA binding. R526 is a binding site for ATP. 3 residues coordinate Mg(2+): V537, H539, and V542. R586 serves as a coordination point for CoA. At K611 the chain carries N6-acetyllysine.

This sequence belongs to the ATP-dependent AMP-binding enzyme family. Mg(2+) is required as a cofactor. In terms of processing, acetylated. Deacetylation by the SIR2-homolog deacetylase activates the enzyme.

The enzyme catalyses acetate + ATP + CoA = acetyl-CoA + AMP + diphosphate. Its function is as follows. Catalyzes the conversion of acetate into acetyl-CoA (AcCoA), an essential intermediate at the junction of anabolic and catabolic pathways. AcsA undergoes a two-step reaction. In the first half reaction, AcsA combines acetate with ATP to form acetyl-adenylate (AcAMP) intermediate. In the second half reaction, it can then transfer the acetyl group from AcAMP to the sulfhydryl group of CoA, forming the product AcCoA. This Brucella anthropi (strain ATCC 49188 / DSM 6882 / CCUG 24695 / JCM 21032 / LMG 3331 / NBRC 15819 / NCTC 12168 / Alc 37) (Ochrobactrum anthropi) protein is Acetyl-coenzyme A synthetase.